A 114-amino-acid chain; its full sequence is T cell receptor beta variable 4-3 (114 aa).

The N-terminal stretch at 1–21 is a signal peptide; it reads MGCRLLCCAVLCLLGAVPMET. The Ig-like domain maps to 22 to 114; that stretch reads GVTQTPRHLV…SALYLCASSQ (93 aa). Cys-42 and Cys-110 are joined by a disulfide. Residues Asn-76 and Asn-89 are each glycosylated (N-linked (GlcNAc...) asparagine).

Alpha-beta TR is a heterodimer composed of an alpha and beta chain; disulfide-linked. The alpha-beta TR is associated with the transmembrane signaling CD3 coreceptor proteins to form the TR-CD3 (TcR or TCR). The assembly of alpha-beta TR heterodimers with CD3 occurs in the endoplasmic reticulum where a single alpha-beta TR heterodimer associates with one CD3D-CD3E heterodimer, one CD3G-CD3E heterodimer and one CD247 homodimer forming a stable octameric structure. CD3D-CD3E and CD3G-CD3E heterodimers preferentially associate with TR alpha and TR beta chains, respectively. The association of the CD247 homodimer is the last step of TcR assembly in the endoplasmic reticulum and is required for transport to the cell surface.

It is found in the cell membrane. V region of the variable domain of T cell receptor (TR) beta chain that participates in the antigen recognition. Alpha-beta T cell receptors are antigen specific receptors which are essential to the immune response and are present on the cell surface of T lymphocytes. Recognize peptide-major histocompatibility (MH) (pMH) complexes that are displayed by antigen presenting cells (APC), a prerequisite for efficient T cell adaptive immunity against pathogens. Binding of alpha-beta TR to pMH complex initiates TR-CD3 clustering on the cell surface and intracellular activation of LCK that phosphorylates the ITAM motifs of CD3G, CD3D, CD3E and CD247 enabling the recruitment of ZAP70. In turn ZAP70 phosphorylates LAT, which recruits numerous signaling molecules to form the LAT signalosome. The LAT signalosome propagates signal branching to three major signaling pathways, the calcium, the mitogen-activated protein kinase (MAPK) kinase and the nuclear factor NF-kappa-B (NF-kB) pathways, leading to the mobilization of transcription factors that are critical for gene expression and essential for T cell growth and differentiation. The T cell repertoire is generated in the thymus, by V-(D)-J rearrangement. This repertoire is then shaped by intrathymic selection events to generate a peripheral T cell pool of self-MH restricted, non-autoaggressive T cells. Post-thymic interaction of alpha-beta TR with the pMH complexes shapes TR structural and functional avidity. The sequence is that of T cell receptor beta variable 4-3 from Homo sapiens (Human).